The sequence spans 122 residues: Cytochrome b-c1 complex subunit 7-2, mitochondrial (122 aa).

The protein belongs to the UQCRB/QCR7 family. In terms of assembly, component of the ubiquinol-cytochrome c oxidoreductase (cytochrome b-c1 complex, complex III, CIII), a multisubunit enzyme composed of 10 subunits. The complex is composed of 3 respiratory subunits cytochrome b (MT-CYB), cytochrome c1 (CYC1-1 or CYC1-2) and Rieske protein (UCR1-1 or UCR1-2), 2 core protein subunits MPPalpha1 (or MPPalpha2) and MPPB, and 5 low-molecular weight protein subunits QCR7-1 (or QCR7-2), UCRQ-1 (or UCRQ-2), QCR9, UCRY and probably QCR6-1 (or QCR6-2). The complex exists as an obligatory dimer and forms supercomplexes (SCs) in the inner mitochondrial membrane with NADH-ubiquinone oxidoreductase (complex I, CI), resulting in different assemblies (supercomplexes SCI(1)III(2) and SCI(2)III(4)).

The protein resides in the mitochondrion inner membrane. Functionally, component of the ubiquinol-cytochrome c oxidoreductase, a multisubunit transmembrane complex that is part of the mitochondrial electron transport chain which drives oxidative phosphorylation. The respiratory chain contains 3 multisubunit complexes succinate dehydrogenase (complex II, CII), ubiquinol-cytochrome c oxidoreductase (cytochrome b-c1 complex, complex III, CIII) and cytochrome c oxidase (complex IV, CIV), that cooperate to transfer electrons derived from NADH and succinate to molecular oxygen, creating an electrochemical gradient over the inner membrane that drives transmembrane transport and the ATP synthase. The cytochrome b-c1 complex catalyzes electron transfer from ubiquinol to cytochrome c, linking this redox reaction to translocation of protons across the mitochondrial inner membrane, with protons being carried across the membrane as hydrogens on the quinol. In the process called Q cycle, 2 protons are consumed from the matrix, 4 protons are released into the intermembrane space and 2 electrons are passed to cytochrome c. In Arabidopsis thaliana (Mouse-ear cress), this protein is Cytochrome b-c1 complex subunit 7-2, mitochondrial (QCR7-2).